Here is a 117-residue protein sequence, read N- to C-terminus: Large ribosomal subunit protein uL18 (117 aa).

Belongs to the universal ribosomal protein uL18 family. As to quaternary structure, part of the 50S ribosomal subunit; part of the 5S rRNA/L5/L18/L25 subcomplex. Contacts the 5S and 23S rRNAs.

This is one of the proteins that bind and probably mediate the attachment of the 5S RNA into the large ribosomal subunit, where it forms part of the central protuberance. This chain is Large ribosomal subunit protein uL18, found in Alkalilimnicola ehrlichii (strain ATCC BAA-1101 / DSM 17681 / MLHE-1).